Reading from the N-terminus, the 643-residue chain is Aspartic protease 3 (643 aa).

Positions 1-31 are cleaved as a signal peptide; it reads MEGRTTAGRATPAGFWLFSCCLASVLWSANA. Positions 87–99 are enriched in low complexity; sequence APEVSGAAGASAS. The disordered stretch occupies residues 87-116; it reads APEVSGAAGASASKTSEKPIRPYHTGPSSR. The region spanning 281 to 600 is the Peptidase A1 domain; it reads YVGVIGIGTP…GTRPSLVGIA (320 aa). Catalysis depends on residues Asp-299 and Asp-490.

The protein belongs to the peptidase A1 family.

The protein resides in the endomembrane system. Inhibited by 49c, a hydroxyethylamine scaffold-based compound. In terms of biological role, required for the processing-mediated maturation of a subset of microneme proteins, such as MIC6, and rhoptry proteins, such as ROP1. By regulating microneme and rhoptry processing, plays an essential role in the lysis of the host cell membrane during egress and in rhoptry content discharge, which is required for invasion of host cells. The polypeptide is Aspartic protease 3 (Toxoplasma gondii).